The following is a 522-amino-acid chain: uncharacterized protein (522 aa).

Over residues methionine 1–arginine 11 the composition is skewed to low complexity. A disordered region spans residues methionine 1–lysine 20. The next 12 helical transmembrane spans lie at valine 69–tyrosine 89, serine 116–methionine 136, leucine 141–alanine 161, phenylalanine 173–tryptophan 193, leucine 204–leucine 224, tyrosine 236–proline 256, valine 303–serine 323, alanine 338–leucine 358, leucine 367–isoleucine 387, leucine 396–isoleucine 416, valine 428–phenylalanine 448, and alanine 462–isoleucine 482.

The protein belongs to the major facilitator superfamily. Allantoate permease family.

The protein localises to the endoplasmic reticulum. It is found in the membrane. This is an uncharacterized protein from Schizosaccharomyces pombe (strain 972 / ATCC 24843) (Fission yeast).